The chain runs to 183 residues: Peptide deformylase (183 aa).

Positions 110 and 153 each coordinate Fe cation. Glu154 is a catalytic residue. Residue His157 coordinates Fe cation.

This sequence belongs to the polypeptide deformylase family. Requires Fe(2+) as cofactor.

The enzyme catalyses N-terminal N-formyl-L-methionyl-[peptide] + H2O = N-terminal L-methionyl-[peptide] + formate. Functionally, removes the formyl group from the N-terminal Met of newly synthesized proteins. Requires at least a dipeptide for an efficient rate of reaction. N-terminal L-methionine is a prerequisite for activity but the enzyme has broad specificity at other positions. In Listeria welshimeri serovar 6b (strain ATCC 35897 / DSM 20650 / CCUG 15529 / CIP 8149 / NCTC 11857 / SLCC 5334 / V8), this protein is Peptide deformylase.